The primary structure comprises 379 residues: MEQLSSANTLFALELFQTLNESSPTGNIFFSPFSISSALAMVILGAKGSTAAQLSKTFHFDSVEDIHSRFQSLNAEVSKRGASHTLKLANRLYGEKTYNFLPEYLASTQKMYGADLAPVDFLHASEDARKEINQWVKGQTEGKIPELLSVGVVDSMTKLVLVNAIYFKGMWEEKFMTEDTTDAPFRLSKKDTKTVKMMYQKKKFPFGYISDLKCKVLEMPYQGGELSMVILLPKDIEDESTGLKKIEKQITLEKLLEWTKRENLEFIDVHVKLPRFKIEESYTLNSNLGRLGVQDLFSSSKADLSGMSGSRDLFISKIVHKSFVEVNEEGTEAAAATGGIATFCMLLPEEEFTVDHPFIFFIRHNPTSNVLFLGRVCSP.

Serine 300 is modified (phosphoserine). The CARD-binding motif (CBM) stretch occupies residues 351-379; it reads EFTVDHPFIFFIRHNPTSNVLFLGRVCSP.

It belongs to the serpin family. Ov-serpin subfamily. In terms of assembly, monomer. Interacts (via C-terminus) with CASP1 and CASP4 (via CARD domain); these interactions regulate the activity of inflammatory caspases. As to expression, ubiquitous with higher expression in pancreas, spleen and bone marrow.

The protein resides in the secreted. The protein localises to the cytoplasm. It is found in the cytolytic granule. It localises to the early endosome. Its function is as follows. Neutrophil serine protease inhibitor that plays an essential role in the regulation of the innate immune response, inflammation and cellular homeostasis. Acts primarily to protect the cell from proteases released in the cytoplasm during stress or infection. These proteases are important in killing microbes but when released from granules, these potent enzymes also destroy host proteins and contribute to mortality. Regulates the activity of the neutrophil proteases elastase, cathepsin G, proteinase-3, chymase, chymotrypsin, and kallikrein-3. Also acts as a potent intracellular inhibitor of granzyme H. During inflammation, limits the activity of inflammatory caspases CASP1 and CASP4 by suppressing their caspase-recruitment domain (CARD) oligomerization and enzymatic activation. In addition, promotes the proliferation of beta-cells when secreted. This chain is Leukocyte elastase inhibitor A (Serpinb1a), found in Mus musculus (Mouse).